We begin with the raw amino-acid sequence, 516 residues long: Lysine--tRNA ligase (516 aa).

Residues 1-23 (MTEPNRAQAAPASPTAELPAADE) form a disordered region. Residues glutamate 426 and glutamate 433 each contribute to the Mg(2+) site.

Belongs to the class-II aminoacyl-tRNA synthetase family. As to quaternary structure, homodimer. Requires Mg(2+) as cofactor.

The protein resides in the cytoplasm. It catalyses the reaction tRNA(Lys) + L-lysine + ATP = L-lysyl-tRNA(Lys) + AMP + diphosphate. This chain is Lysine--tRNA ligase, found in Cupriavidus pinatubonensis (strain JMP 134 / LMG 1197) (Cupriavidus necator (strain JMP 134)).